The chain runs to 165 residues: HTH-type transcriptional regulator MmpR5 (165 aa).

The region spanning 1 to 151 is the HTH marR-type domain; it reads MSVNDGVDQM…LLAYMENVVS (151 aa). The segment at residues 53 to 76 is a DNA-binding region (H-T-H motif); it reads SEELATALAASSGGISTNARMLIQ.

Homodimer.

Its function is as follows. Controls the expression level of the Mmps2-MmpL2, MmpS4-MmpL4, and MmpS5-MmpL5 transport systems. Also controls its own expression. Acts by binding directly to the promoter regions. This chain is HTH-type transcriptional regulator MmpR5, found in Mycobacterium tuberculosis (strain ATCC 25618 / H37Rv).